Consider the following 872-residue polypeptide: C-mannosyltransferase dpy-19 homolog (872 aa).

Transmembrane regions (helical) follow at residues Pro4–Val24, Phe126–Ser146, Ile149–Ile169, Phe179–Ile199, Ile211–Ile231, Val257–Gly277, Ser279–Val299, Phe326–Asn346, and Val399–Phe419. A coiled-coil region spans residues Lys508–Asp535. The disordered stretch occupies residues Ile514 to Val620. A compositionally biased stretch (basic and acidic residues) spans Glu524–Ala533. Positions Thr541–Glu551 are enriched in acidic residues. Transmembrane regions (helical) follow at residues Ile627–Leu647 and Asn678–Val698.

The protein belongs to the dpy-19 family.

It is found in the membrane. Its function is as follows. Probable C-mannosyltransferase that mediates C-mannosylation of tryptophan residues on target proteins. In Drosophila melanogaster (Fruit fly), this protein is C-mannosyltransferase dpy-19 homolog.